Consider the following 192-residue polypeptide: 3-hydroxyanthranilate 3,4-dioxygenase 1 (192 aa).

Residue Arg50 coordinates O2. The Fe cation site is built by His54, Glu60, and His102. Glu60 provides a ligand contact to substrate. Positions 106 and 116 each coordinate substrate. Cys131, Cys134, Cys168, and Cys171 together coordinate a divalent metal cation.

The protein belongs to the 3-HAO family. Requires Fe(2+) as cofactor.

The protein localises to the cytoplasm. It carries out the reaction 3-hydroxyanthranilate + O2 = (2Z,4Z)-2-amino-3-carboxymuconate 6-semialdehyde. Its pathway is cofactor biosynthesis; NAD(+) biosynthesis; quinolinate from L-kynurenine: step 3/3. Functionally, catalyzes the oxidative ring opening of 3-hydroxyanthranilate to 2-amino-3-carboxymuconate semialdehyde, which spontaneously cyclizes to quinolinate. This Aspergillus oryzae (strain ATCC 42149 / RIB 40) (Yellow koji mold) protein is 3-hydroxyanthranilate 3,4-dioxygenase 1 (bna1-1).